The primary structure comprises 188 residues: Protein SSX1 (188 aa).

Disordered regions lie at residues 1–22 and 111–188; these read MNGD…EKRS and IMPK…EDDE. Residues 20 to 83 form the KRAB-related domain; the sequence is KRSKAFDDIA…KQATDFQGND (64 aa). Residues 115–125 show a composition bias toward basic and acidic residues; the sequence is KPAEDENDSKG. Ser123 carries the post-translational modification Phosphoserine. Residues 153–170 are compositionally biased toward basic residues; the sequence is KRSGPKRGKHAWTHRLRE. Over residues 179–188 the composition is skewed to acidic residues; the sequence is EISDPEEDDE.

The protein belongs to the SSX family. As to expression, expressed at high level in the testis. Expressed at low level in thyroid. Not detected in tonsil, colon, lung, spleen, prostate, kidney, striated and smooth muscles. Detected in rhabdomyosarcoma and fibrosarcoma cell lines. Not detected in mesenchymal and epithelial cell lines. Expressed in testis.

It localises to the cytoplasm. It is found in the cytoskeleton. The protein resides in the flagellum axoneme. Functionally, could act as a modulator of transcription. Plays a role in spermatogenesis. This is Protein SSX1 (SSX1) from Homo sapiens (Human).